We begin with the raw amino-acid sequence, 1055 residues long: Cell-division control histidine kinase PdhS (1055 aa).

The interval Met1–Asp626 is important for polar localization. The disordered stretch occupies residues Asp419 to Arg439. An interaction with DivK region spans residues Ala627 to Asp1055. The PAS domain maps to His679–Val750. The Histidine kinase domain maps to Arg822–Arg1051. His825 is modified (phosphohistidine; by autocatalysis).

Interacts with DivK.

It is found in the cytoplasm. The catalysed reaction is ATP + protein L-histidine = ADP + protein N-phospho-L-histidine.. Its function is as follows. Functions as a polar differentiation marker. Essential protein that, by localizing in the old pole of dividing cells, controls cell division and maturation, probably through control of DivK phosphorylation status and cellular distribution, which in turn regulates CtrA, a transcriptional regulator of the minB operon. The asymmetrical localization of this protein is probably required for cells to enter a new division cycle. This chain is Cell-division control histidine kinase PdhS (pdhS), found in Brucella anthropi (strain ATCC 49188 / DSM 6882 / CCUG 24695 / JCM 21032 / LMG 3331 / NBRC 15819 / NCTC 12168 / Alc 37) (Ochrobactrum anthropi).